The chain runs to 136 residues: Translation initiation factor 5A (136 aa).

Lysine 37 is modified (hypusine).

Belongs to the eIF-5A family.

It is found in the cytoplasm. Its function is as follows. Functions by promoting the formation of the first peptide bond. This chain is Translation initiation factor 5A (eIF5A), found in Thermococcus gammatolerans (strain DSM 15229 / JCM 11827 / EJ3).